A 1074-amino-acid polypeptide reads, in one-letter code: Zinc finger protein 518B (1074 aa).

A compositionally biased stretch (polar residues) spans His-12–Pro-24. The disordered stretch occupies residues His-12–Asn-36. 2 C2H2-type zinc fingers span residues Phe-162–His-184 and Tyr-190–His-213. Residues Lys-482, Lys-491, and Lys-558 each participate in a glycyl lysine isopeptide (Lys-Gly) (interchain with G-Cter in SUMO2) cross-link. The tract at residues Ser-568–Ser-590 is disordered. A compositionally biased stretch (basic and acidic residues) spans Arg-570–Ala-582. Lys-594 participates in a covalent cross-link: Glycyl lysine isopeptide (Lys-Gly) (interchain with G-Cter in SUMO2). 2 disordered regions span residues Thr-603–Val-632 and Lys-678–Ser-704. Over residues Gly-604–Glu-622 the composition is skewed to basic and acidic residues. Over residues Gly-693–Ser-704 the composition is skewed to polar residues. Residues Lys-809, Lys-846, and Lys-860 each participate in a glycyl lysine isopeptide (Lys-Gly) (interchain with G-Cter in SUMO2) cross-link. Residues Phe-1036 to His-1058 form a C2H2-type 3 zinc finger.

This sequence belongs to the krueppel C2H2-type zinc-finger protein family.

The protein resides in the nucleus. Through its association with the EHMT1-EHMT2/G9A and PRC2/EED-EZH2 histone methyltransferase complexes may function in gene silencing, regulating repressive post-translational methylation of histone tails at promoters of target genes. This is Zinc finger protein 518B (ZNF518B) from Homo sapiens (Human).